A 629-amino-acid chain; its full sequence is Methyl-accepting chemotaxis protein PscA (629 aa).

Over 1–9 (MKNLGFSKK) the chain is Cytoplasmic. A helical membrane pass occupies residues 10–30 (ILLAAALIVVVAFSVFIVIND). The Periplasmic portion of the chain corresponds to 31–276 (YRQRQSLKSS…AYAMLTEFRT (246 aa)). One can recognise a Cache domain in the interval 36–258 (SLKSSVKSEL…QGVATANWYV (223 aa)). A helical membrane pass occupies residues 277-297 (SAITAMVVVVMVIILLLGPLI). The HAMP domain occupies 298-352 (RVLMQPLHQMGRAMRDIADGEGDLTKRLAITSHDEFGALAESFNHFVERIHTSIR). At 298–629 (RVLMQPLHQM…LQQLVGSFRI (332 aa)) the chain is on the cytoplasmic side. The Methyl-accepting transducer domain maps to 357 to 593 (TAAQLGEVAT…SINVDITHIN (237 aa)).

Belongs to the methyl-accepting chemotaxis (MCP) protein family.

Its subcellular location is the cell inner membrane. In terms of biological role, chemotactic-signal transducers respond to changes in the concentration of attractants and repellents in the environment, transduce a signal from the outside to the inside of the cell, and facilitate sensory adaptation through the variation of the level of methylation. PscA recognizes specifically and with high affinity L-Asp, D-Asp and L-Glu. It exerts a double function, in mediating chemotaxis to these amino acids and in modulating cyclic di-GMP (c-di-GMP) levels, causing alterations in biofilm development. Plays a key role in the infection process. It may facilitate bacterial entry into the plant. This is Methyl-accepting chemotaxis protein PscA from Pseudomonas syringae pv. tomato (strain ATCC BAA-871 / DC3000).